A 171-amino-acid chain; its full sequence is Calcium channel flower homolog (171 aa).

The Cytoplasmic portion of the chain corresponds to 1 to 31; that stretch reads MSGSGAAGAAAGPAPPAQEEGMTWWYRWLCR. A helical membrane pass occupies residues 32–52; it reads LAGVLGAVSCAISGLFNCVTI. At 53–56 the chain is on the extracellular side; the sequence is HPLN. Residues 57–77 traverse the membrane as a helical segment; the sequence is IAAGVWMIMNAFILLLCEAPF. Residues 78 to 101 are Cytoplasmic-facing; sequence CCQFVEFANTVAEKVDRLRSWQKA. A helical membrane pass occupies residues 102–122; the sequence is VFYCGMAIVPIVMSLTLTTLL. The Extracellular segment spans residues 123–124; the sequence is GN. Residues 125-141 traverse the membrane as a helical segment; sequence AIAFATGVLYGLSALGK. Residues 142–171 are Cytoplasmic-facing; sequence KGDAISYARIQQQRQQADEEKLAETFEGEL.

This sequence belongs to the calcium channel flower family. In terms of assembly, interacts with adaptor protein complex 2 (AP-2). Expressed in neurons in the brain (at protein level). Expressed in neuroblastoma cell lines (at protein level). Expressed in cytotoxic T-lymphoocytes (at protein level). In terms of tissue distribution, low levels of expression in various tissues including the brain, eye, heart, liver and colon. Expression in the heart is at slightly higher levels than isoform 3. Expressed in skin cells. As to expression, very low levels of expression in the brain, liver and eye. Detected at very low levels of expression in skin cells. Expressed in various tissues, with highest levels of expression in the brain and eye. Expressed in skin cells. Low levels of expression in the liver, colon, heart and spleen. In terms of tissue distribution, barely detected in the brain and liver.

It is found in the cell membrane. It localises to the vesicle. In terms of biological role, transmembrane protein which mediates synaptic endocytosis and fitness-based cell culling. In response to different stimulus strengths, controls two major modes of synaptic vesicle (SV) retrieval in hippocampal neurons; Clathrin-mediated endocytosis (CME) in response to mild stimulation and activity-dependent bulk endocytosis (ADBE) in response to strong stimulation. In cytotoxic T-lymphoocytes (CTLs) facilitates calcium-dependent endocytosis of cytotoxic granules (CGs) at the immuno synapse. Different isoforms work as fitness fingerprints in 'loser' and 'winner' cells and thereby mediate win/lose decisions as part of the cell competition process. The chain is Calcium channel flower homolog (Cacfd1) from Mus musculus (Mouse).